The sequence spans 549 residues: Leucine-rich repeat, immunoglobulin-like domain and transmembrane domain-containing protein 2 (549 aa).

A signal peptide spans Met-1 to Pro-22. Positions Phe-23 to Pro-54 constitute an LRRNT domain. 4 LRR repeats span residues Ser-80 to Pro-103, Glu-104 to Ala-125, Leu-128 to Phe-149, and Asn-152 to Asn-173. Asn-90 carries N-linked (GlcNAc...) asparagine glycosylation. The LRRCT domain maps to Asn-200 to Lys-252. One can recognise an Ig-like domain in the interval Pro-253–Val-339. N-linked (GlcNAc...) asparagine glycosylation is present at Asn-261. A disulfide bond links Cys-274 and Cys-327. A Fibronectin type-III domain is found at Glu-361–Val-447. The chain crosses the membrane as a helical span at residues Leu-463–Val-483. An N-linked (GlcNAc...) asparagine glycan is attached at Asn-491. Residues Phe-521–Ser-549 are disordered. Residues Glu-538 to Ser-549 show a composition bias toward acidic residues.

Interacts with LRIT1; may form a heterodimer with LRIT1.

The protein resides in the membrane. This Mus musculus (Mouse) protein is Leucine-rich repeat, immunoglobulin-like domain and transmembrane domain-containing protein 2 (Lrit2).